The following is a 503-amino-acid chain: Activin receptor type-1-like (503 aa).

Positions Met-1–Gly-21 are cleaved as a signal peptide. Residues Asp-22–Gln-118 lie on the Extracellular side of the membrane. 3 cysteine pairs are disulfide-bonded: Cys-34/Cys-51, Cys-36/Cys-41, and Cys-46/Cys-69. The tract at residues His-73–Leu-76 is mediates specificity for BMP ligand. 2 cysteine pairs are disulfide-bonded: Cys-77–Cys-89 and Cys-90–Cys-95. N-linked (GlcNAc...) asparagine glycosylation occurs at Asn-98. The chain crosses the membrane as a helical span at residues Leu-119–Trp-141. Residues His-142–Gln-503 are Cytoplasmic-facing. 3 positions are modified to phosphoserine: Ser-155, Ser-160, and Ser-161. Residues Ser-172–Gln-201 enclose the GS domain. A Protein kinase domain is found at Val-202 to Ile-492. ATP contacts are provided by residues Val-208 to Val-216 and Lys-229. The Proton acceptor role is filled by Asp-330.

It belongs to the protein kinase superfamily. TKL Ser/Thr protein kinase family. TGFB receptor subfamily. Interacts with TSC22D1/TSC-22. The cofactor is Mg(2+). Mn(2+) serves as cofactor.

The protein resides in the cell membrane. The enzyme catalyses L-threonyl-[receptor-protein] + ATP = O-phospho-L-threonyl-[receptor-protein] + ADP + H(+). The catalysed reaction is L-seryl-[receptor-protein] + ATP = O-phospho-L-seryl-[receptor-protein] + ADP + H(+). Type I receptor for TGF-beta family ligands BMP9/GDF2 and BMP10 and important regulator of normal blood vessel development. On ligand binding, forms a receptor complex consisting of two type II and two type I transmembrane serine/threonine kinases. Type II receptors phosphorylate and activate type I receptors which autophosphorylate, then bind and activate SMAD transcriptional regulators. May bind activin as well. The polypeptide is Activin receptor type-1-like (ACVRL1) (Homo sapiens (Human)).